A 1300-amino-acid polypeptide reads, in one-letter code: Nephrocystin-3 (1300 aa).

Residues 82-183 (KNNEVASMQK…LQRLQAQGIQ (102 aa)) are a coiled coil. TPR repeat units lie at residues 443 to 476 (TMED…ICEL), 916 to 949 (ADLY…RETA), 958 to 991 (AQSL…SENA), 1000 to 1033 (AREL…RQKS), 1066 to 1099 (ARTL…RERV), 1108 to 1141 (AQSI…RRRA), 1150 to 1183 (AYTV…RQKS), 1192 to 1225 (ATAL…YEDS), and 1234 to 1267 (GETL…KETE). A disordered region spans residues 1268 to 1288 (TSVLGAKAPSGHSSSGGDTYS). The span at 1278–1288 (GHSSSGGDTYS) shows a compositional bias: polar residues.

It localises to the cell projection. It is found in the cilium. Its function is as follows. Required for normal ciliary development and function. Inhibits disheveled-1-induced canonical Wnt-signaling activity and may also play a role in the control of non-canonical Wnt signaling that regulates planar cell polarity. Probably acts as a molecular switch between different Wnt signaling pathways. Required for proper convergent extension cell movements. This Xenopus laevis (African clawed frog) protein is Nephrocystin-3 (nphp3).